The primary structure comprises 255 residues: Myogenic factor 5 (255 aa).

A bHLH domain is found at 83-134 (DRRKAATMRERRRLKKVNQAFETLKRCTTTNPNQRLPKVEILRNAIRYIESL). The interval 226–249 (DTASLSPATSANSQPATPGPSSSR) is disordered.

As to quaternary structure, efficient DNA binding requires dimerization with another bHLH protein.

The protein localises to the nucleus. Functionally, acts as a transcriptional activator that promotes transcription of muscle-specific target genes and plays a role in muscle differentiation. Together with MYOG and MYOD1, co-occupies muscle-specific gene promoter core region during myogenesis. Induces fibroblasts to differentiate into myoblasts. Probable sequence specific DNA-binding protein. The protein is Myogenic factor 5 (Myf5) of Mus musculus (Mouse).